The chain runs to 307 residues: Methionyl-tRNA formyltransferase (307 aa).

Residue 108 to 111 (SLLP) coordinates (6S)-5,6,7,8-tetrahydrofolate.

This sequence belongs to the Fmt family.

The catalysed reaction is L-methionyl-tRNA(fMet) + (6R)-10-formyltetrahydrofolate = N-formyl-L-methionyl-tRNA(fMet) + (6S)-5,6,7,8-tetrahydrofolate + H(+). In terms of biological role, attaches a formyl group to the free amino group of methionyl-tRNA(fMet). The formyl group appears to play a dual role in the initiator identity of N-formylmethionyl-tRNA by promoting its recognition by IF2 and preventing the misappropriation of this tRNA by the elongation apparatus. The chain is Methionyl-tRNA formyltransferase from Xylella fastidiosa (strain 9a5c).